The primary structure comprises 339 residues: DNA-directed RNA polymerase subunit alpha (339 aa).

The interval 1 to 233 is alpha N-terminal domain (alpha-NTD); sequence MVREEVAGST…DLFLPFLHAE (233 aa). Residues 264–339 form an alpha C-terminal domain (alpha-CTD) region; the sequence is KKGIPLNCIF…IDLLKNKLSF (76 aa).

Belongs to the RNA polymerase alpha chain family. In plastids the minimal PEP RNA polymerase catalytic core is composed of four subunits: alpha, beta, beta', and beta''. When a (nuclear-encoded) sigma factor is associated with the core the holoenzyme is formed, which can initiate transcription.

It is found in the plastid. The protein localises to the chloroplast. It carries out the reaction RNA(n) + a ribonucleoside 5'-triphosphate = RNA(n+1) + diphosphate. Functionally, DNA-dependent RNA polymerase catalyzes the transcription of DNA into RNA using the four ribonucleoside triphosphates as substrates. The protein is DNA-directed RNA polymerase subunit alpha of Elymus hystrix (Eastern bottlebrush grass).